Consider the following 1378-residue polypeptide: MPSVVQSNFRVRKNLGRVRRIIDVPNLIDIQKSSYDKFLQMSVPPNEREEVGLQAVFRSVFPIKDFNGTSELVFVSYNLEPPKYDVDECRQRGMTYSAPIKVTNQLMIYDTRDGGERIVRDIKEQEVYFGELPLMTETGTFIINGTERVVVSQLHRSPGVFFDHDKGKTHSSGKLLYSARVIPYRGSWLDFEFDPKDIIYVRIDRRRKMHATVLLRALGYSTQDLLNYFYSTETVYLEKGGKYAKSIEYDLLAGQRTTRDIKIGNDVIVKKNTKFTRAAIRKMKEAKLERLSLEPEELVGKVAAHDIVDPETGEVVVEVNEELTEAKLERLRDANIEQFRILFIDGLNVGSYLRDTLLTDKVKTMEDSILEIYRRLRPGDPPTLETAKTLFHNLFFNAERYDLSKVGRLKLNYKFYRDVPEDERPGLDLTVLTPQDILETVRHLIELKNGRGSVDDIDHLGNRRVRAVGELMENQYRIGLVRMERAIKERMSMSQEIDTLMPHDLINAKPVSAVVKEYFGSSQLSQFMDQTNPLSEVTHKRRLSALGPGGLTRERAGFEVRDVHATHYGRICPIETPEGPNIGLIASLSTFARVNEFGFVETPYRKVENGRVTEDVIWLSALEEEGKYIAQATVNLDEGGRFKESLVSARYNGEFKIVTPEMVELMDVAPNQMVSVAAALVPFLEHDDANRALMGANMQRQAVPLVQSHAPLVGTGMEERLARDSGVCVIARRPGVVESVDATRIVVRAEGEGAEVPDIYHLMKFQRSNQSTCYTQKPVVRTGEVVKKGDVLADGPSTDMGELALGQNVLVAFMPWQGYNFEDSILVSERIAKDDVFTSIHIEEFECVARDTKLGKEEITRDIPNVGEEALKDLDDSGIVRIGAEVRPGDILVGKITPKGETQLSPEEKLLRAIFGEKAGDVRDSSLKVPPGVGGIVINARVFSRKGTEKDDRARDIEDQERARIERTRDEEIKILRDSFFRRIRELLLGKEATGKLVDDKGKVLFQKGAIIDEPSLAEIPRKYWGEIPVDDAERVQQILRDLEELVRTREEHFRDKIDRLSKGDELPPGVIKMVKVYIAIKRKLQVGDKMAGRHGNKGVISRILPEEDMPYLQDGRPVDLVLNPLGVPSRMNVGQILEIHLGWGAFELGNQLQRMIEQQRASAEIKEHLKAIYAGDETMNGFFDNLDDGDVKRFVKTVDEGVFMGSPVFDGAHESDIKGALDLAGLPTSGQAILFDGRTGDAFDQNVTVGIMYMLKLHHLVDDKIHARSIGPYSLVTQQPLGGKAQFGGQRLGEMEVWAMEAYGAAYALQEFLTVKSDDVMGRTRMYEAIVKGDYTLEAGLPESFNVLIKELQSLCLNVELVETSAGVEASAAEEEE.

It belongs to the RNA polymerase beta chain family. The RNAP catalytic core consists of 2 alpha, 1 beta, 1 beta' and 1 omega subunit. When a sigma factor is associated with the core the holoenzyme is formed, which can initiate transcription.

The catalysed reaction is RNA(n) + a ribonucleoside 5'-triphosphate = RNA(n+1) + diphosphate. Its function is as follows. DNA-dependent RNA polymerase catalyzes the transcription of DNA into RNA using the four ribonucleoside triphosphates as substrates. The sequence is that of DNA-directed RNA polymerase subunit beta from Sorangium cellulosum (strain So ce56) (Polyangium cellulosum (strain So ce56)).